The following is a 239-amino-acid chain: MSNNVISPEFDEQGRALRRIRSFVRRQGRLTKGQQYALDTLWPAMGTDYQAQPLDLTALFGRAAPVTLEIGFGMGASLVTMAAAHPEQNFIGIEVHLPGVGACLASAQEAGVSNLRVMCHDAVEVLEQMIPDASLALVQLFFPDPWHKARHNKRRIIQAPFVELVGRKLAAGGVFHMATDWQPYAEHMLAVMSDAAFFRSLSSTGDYVPRPASRPLTKFEQRGQRLGHGVWDLMFAKTV.

The S-adenosyl-L-methionine site is built by Glu-69, Glu-94, Asp-121, and Asp-144. Asp-144 is a catalytic residue. Lys-148 is a substrate binding site. The interaction with RNA stretch occupies residues Arg-150–Arg-155. Residues Asp-180 and Thr-217 to Glu-220 each bind substrate.

It belongs to the class I-like SAM-binding methyltransferase superfamily. TrmB family. In terms of assembly, monomer.

It carries out the reaction guanosine(46) in tRNA + S-adenosyl-L-methionine = N(7)-methylguanosine(46) in tRNA + S-adenosyl-L-homocysteine. It functions in the pathway tRNA modification; N(7)-methylguanine-tRNA biosynthesis. Functionally, catalyzes the formation of N(7)-methylguanine at position 46 (m7G46) in tRNA. The protein is tRNA (guanine-N(7)-)-methyltransferase of Sodalis glossinidius (strain morsitans).